Consider the following 410-residue polypeptide: Transcription factor PHYTOCHROME INTERACTING FACTOR-LIKE 13 (410 aa).

The span at 82 to 92 (AAAAAGPSSHH) shows a compositional bias: low complexity. Disordered regions lie at residues 82–110 (AAAA…MRSG) and 137–225 (CRDA…AEVH). Residues 93-104 (APPPDLPPPAAR) show a composition bias toward pro residues. The span at 187–197 (GREDSDSRSED) shows a compositional bias: basic and acidic residues. Over residues 209–219 (SSRRYGSKRRT) the composition is skewed to basic residues. The segment at 220-233 (RAAEVHNLSERRRR) is basic motif. Residues 220–269 (RAAEVHNLSERRRRDRINEKMRALQELIPHCNKTDKASILDEAIEYLKSL) enclose the bHLH domain. The tract at residues 234–269 (DRINEKMRALQELIPHCNKTDKASILDEAIEYLKSL) is helix-loop-helix motif. The tract at residues 357-410 (PFLHPDGWQTVPPQVSGPYASGPQVAQQNQIPKASASTVLPNSGAEQPPTSDGI) is disordered. Polar residues predominate over residues 380–410 (QVAQQNQIPKASASTVLPNSGAEQPPTSDGI).

Belongs to the bHLH protein family. As to quaternary structure, interacts with PRR1. Interacts with LF. In terms of tissue distribution, highly expressed in the node portions of the stem. Expressed in the leaves and the basal part of shoots.

The protein localises to the nucleus. Functionally, transcription factor that may act as negative regulator of phyB-dependent light signal transduction. Transcription activator that acts as a positive regulator of internode elongation. May function via regulation of cell wall-related genes. May play a role in a drought-associated growth-restriction mechanism in response to drought stress. This is Transcription factor PHYTOCHROME INTERACTING FACTOR-LIKE 13 from Oryza sativa subsp. japonica (Rice).